Consider the following 91-residue polypeptide: DNA-binding protein HU (91 aa).

This sequence belongs to the bacterial histone-like protein family.

Its function is as follows. Histone-like DNA-binding protein which is capable of wrapping DNA to stabilize it, and thus to prevent its denaturation under extreme environmental conditions. Also seems to act as a fortuitous virulence factor in delayed sequelae by binding to heparan sulfate-proteoglycans in the extracellular matrix of target organs and acting as a nidus for in situ immune complex formation. This is DNA-binding protein HU (hup) from Streptococcus mutans serotype c (strain ATCC 700610 / UA159).